The following is a 288-amino-acid chain: MTDTVIHTESATSKYVNVVEDGTELRVHYNDTGTGNEALVLLHGSGPGATGWANFHRNVDAFANAGYRVILVDCPGWGKSDSIVCTGSRSDLNARVLAGVLDTLGIGRAHLVGNSMGGHSAVAFALSYPERVGKLVLMGGGTGGPSQFVPMPTEGIKLLQALYRDPTLENLKKMLNVFVYDASTMTEELMQTRLENMLGRRDHLENFVKSLTANPKQFPDYGHRLSEIKAPALVIWGRDDRFVPMDVGLRLVWNMPNADLHVFGRCGHWAQWEHAERFNRMVLEFLRR.

One can recognise an AB hydrolase-1 domain in the interval 38–274 (ALVLLHGSGP…RCGHWAQWEH (237 aa)). Histidine 268 serves as the catalytic Proton acceptor.

The protein belongs to the AB hydrolase superfamily. MhpC family. In terms of assembly, homodimer.

The enzyme catalyses (2Z,4E)-2-hydroxy-6-oxonona-2,4-dienedioate + H2O = (2Z)-2-hydroxypenta-2,4-dienoate + succinate + H(+). It carries out the reaction (2Z,4E,7E)-2-hydroxy-6-oxonona-2,4,7-trienedioate + H2O = (2Z)-2-hydroxypenta-2,4-dienoate + fumarate + H(+). It functions in the pathway aromatic compound metabolism; 3-phenylpropanoate degradation. Catalyzes the cleavage of the C5-C6 bond of 2-hydroxy-6-oxononadienedioate and 2-hydroxy-6-oxononatrienedioate, a dienol ring fission product of the bacterial meta-cleavage pathway for degradation of phenylpropionic acid. In Burkholderia vietnamiensis (strain G4 / LMG 22486) (Burkholderia cepacia (strain R1808)), this protein is 2-hydroxy-6-oxononadienedioate/2-hydroxy-6-oxononatrienedioate hydrolase.